Here is a 705-residue protein sequence, read N- to C-terminus: Glycogen [starch] synthase isoform 2 (705 aa).

Position 20 (R20) interacts with UDP. S159 carries the phosphoserine modification. Residues H193 and R199 each coordinate UDP-alpha-D-glucose. Alpha-D-glucose 6-phosphate is bound by residues H280, E281, Q283, H286, and K290. UDP is bound at residue R320. Residue R320 coordinates UDP-alpha-D-glucose. A phosphoserine mark is found at S363 and S467. Position 500 (H500) interacts with alpha-D-glucose 6-phosphate. E509, W511, and G512 together coordinate UDP-alpha-D-glucose. Residue T514 participates in UDP binding. Alpha-D-glucose 6-phosphate-binding residues include R583 and R587. Position 651 is a phosphoserine (S651). S655 is subject to Phosphoserine; by PHO85. Residues S661 and S663 each carry the phosphoserine; by PKA modification. T668 carries the phosphothreonine; by PHO85 modification. A disordered region spans residues 686–705 (SLGVNPAADDDDDGPYADDS). Over residues 693–705 (ADDDDDGPYADDS) the composition is skewed to acidic residues.

It belongs to the glycosyltransferase 3 family. Interacts with PCL10. In terms of processing, phosphorylated by the cyclin-CDK PCL10-PHO85. Phosphorylation causes inactivation of enzyme.

It localises to the cytoplasm. The protein resides in the cytosol. It carries out the reaction [(1-&gt;4)-alpha-D-glucosyl](n) + UDP-alpha-D-glucose = [(1-&gt;4)-alpha-D-glucosyl](n+1) + UDP + H(+). It participates in glycan biosynthesis; glycogen biosynthesis. Its activity is regulated as follows. Allosteric activation by glucose-6-phosphate, and phosphorylation by a cAMP-dependent kinase. In terms of biological role, glycogen synthase participates in the glycogen biosynthetic process along with glycogenin and glycogen branching enzyme. Extends the primer composed of a few glucose units formed by glycogenin by adding new glucose units to it. In this context, glycogen synthase transfers the glycosyl residue from UDP-Glc to the non-reducing end of alpha-1,4-glucan. The protein is Glycogen [starch] synthase isoform 2 (GSY2) of Saccharomyces cerevisiae (strain ATCC 204508 / S288c) (Baker's yeast).